The primary structure comprises 237 residues: Exosome complex component Rrp4 (237 aa).

Residues 72–144 (GHIVVGKVVD…LSKDPVLTIK (73 aa)) enclose the S1 motif domain. A KH domain is found at 152–211 (PRGTLVEIPPQKVPRVIGRRGSMVSMIEDLLGVKLIVGQNGRIVVVGDDPQRVEIAVLAV).

It belongs to the RRP4 family. As to quaternary structure, component of the archaeal exosome complex. Forms a trimer of Rrp4 and/or Csl4 subunits. The trimer associates with a hexameric ring-like arrangement composed of 3 Rrp41-Rrp42 heterodimers.

It is found in the cytoplasm. In terms of biological role, non-catalytic component of the exosome, which is a complex involved in RNA degradation. Increases the RNA binding and the efficiency of RNA degradation. Confers strong poly(A) specificity to the exosome. This is Exosome complex component Rrp4 from Thermofilum pendens (strain DSM 2475 / Hrk 5).